Consider the following 364-residue polypeptide: Chorismate synthase (364 aa).

The segment at M41–R60 is disordered. NADP(+)-binding residues include R48 and R54. Residues R125–S127, N238–A239, G278, K293–S297, and R319 contribute to the FMN site.

The protein belongs to the chorismate synthase family. In terms of assembly, homotetramer. The cofactor is FMNH2.

The enzyme catalyses 5-O-(1-carboxyvinyl)-3-phosphoshikimate = chorismate + phosphate. It functions in the pathway metabolic intermediate biosynthesis; chorismate biosynthesis; chorismate from D-erythrose 4-phosphate and phosphoenolpyruvate: step 7/7. In terms of biological role, catalyzes the anti-1,4-elimination of the C-3 phosphate and the C-6 proR hydrogen from 5-enolpyruvylshikimate-3-phosphate (EPSP) to yield chorismate, which is the branch point compound that serves as the starting substrate for the three terminal pathways of aromatic amino acid biosynthesis. This reaction introduces a second double bond into the aromatic ring system. This Shewanella sp. (strain MR-4) protein is Chorismate synthase.